Consider the following 220-residue polypeptide: Glutamine amidotransferase-like class 1 domain-containing protein 1 (220 aa).

The first 35 residues, 1–35 (MASERLPSRPACLLVASGAAEGVSAQSFLHCFTLA), serve as a signal peptide directing secretion. N-linked (GlcNAc...) asparagine glycans are attached at residues N57 and N201.

It belongs to the peptidase C56 family. Homotetramer. Component of the FERRY complex composed of five subunits, TBCK, PPP1R21, FERRY3, CRYZL1 and GATD1 with a ratio of 1:2:1:2:4, respectively.

The protein localises to the secreted. The protein resides in the early endosome. In terms of biological role, component of the FERRY complex (Five-subunit Endosomal Rab5 and RNA/ribosome intermediary). The FERRY complex directly interacts with mRNAs and RAB5A, and functions as a RAB5A effector involved in the localization and the distribution of specific mRNAs most likely by mediating their endosomal transport. The complex recruits mRNAs and ribosomes to early endosomes through direct mRNA-interaction. This chain is Glutamine amidotransferase-like class 1 domain-containing protein 1, found in Bos taurus (Bovine).